The following is a 547-amino-acid chain: Probable pectinesterase/pectinesterase inhibitor 12 (547 aa).

An N-terminal signal peptide occupies residues Met-1–Ser-23. The pectinesterase inhibitor 12 stretch occupies residues Asn-31–Ala-185. N-linked (GlcNAc...) asparagine glycans are attached at residues Asn-131, Asn-247, Asn-260, and Asn-303. Positions Ser-237–Asp-533 are pectinesterase 12. 2 residues coordinate substrate: Thr-312 and Gln-342. Asp-365 acts as the Proton donor; for pectinesterase activity in catalysis. A disulfide bond links Cys-379 and Cys-399. Catalysis depends on Asp-386, which acts as the Nucleophile; for pectinesterase activity. 2 N-linked (GlcNAc...) asparagine glycosylation sites follow: Asn-432 and Asn-443. Substrate is bound by residues Arg-454 and Trp-456. N-linked (GlcNAc...) asparagine glycosylation is present at Asn-523.

This sequence in the N-terminal section; belongs to the PMEI family. In the C-terminal section; belongs to the pectinesterase family. In terms of tissue distribution, expressed in siliques.

The protein resides in the secreted. Its subcellular location is the cell wall. The catalysed reaction is [(1-&gt;4)-alpha-D-galacturonosyl methyl ester](n) + n H2O = [(1-&gt;4)-alpha-D-galacturonosyl](n) + n methanol + n H(+). The protein operates within glycan metabolism; pectin degradation; 2-dehydro-3-deoxy-D-gluconate from pectin: step 1/5. In terms of biological role, acts in the modification of cell walls via demethylesterification of cell wall pectin. The chain is Probable pectinesterase/pectinesterase inhibitor 12 (PME12) from Arabidopsis thaliana (Mouse-ear cress).